Here is a 277-residue protein sequence, read N- to C-terminus: Serine protease 33 (277 aa).

The N-terminal stretch at 1 to 24 is a signal peptide; the sequence is MRGASHLQILLLLVLGTRMQECAA. In terms of domain architecture, Peptidase S1 spans 34–276; that stretch reads IVGGRDAQDG…YSPWIQARLS (243 aa). C59 and C75 are disulfide-bonded. Catalysis depends on charge relay system residues H74 and D123. 3 cysteine pairs are disulfide-bonded: C157–C234, C190–C213, and C224–C252. The active-site Charge relay system is S228.

The protein belongs to the peptidase S1 family. In terms of processing, not glycosylated. In terms of tissue distribution, widely expressed.

It is found in the secreted. In terms of biological role, serine protease that has amidolytic activity, cleaving its substrates before Arg residues. The chain is Serine protease 33 (Prss33) from Mus musculus (Mouse).